The sequence spans 396 residues: Stearoyl-[acyl-carrier-protein] 9-desaturase, chloroplastic (396 aa).

A chloroplast-targeting transit peptide spans 1–32 (MALKLNPVTTFPSTRSLNNFSSRSPRTFLMAA). Positions 138, 176, 179, 229, 262, and 265 each coordinate Fe cation.

This sequence belongs to the fatty acid desaturase type 2 family. As to quaternary structure, homodimer. It depends on Fe(2+) as a cofactor.

The protein resides in the plastid. It is found in the chloroplast. It catalyses the reaction octadecanoyl-[ACP] + 2 reduced [2Fe-2S]-[ferredoxin] + O2 + 2 H(+) = (9Z)-octadecenoyl-[ACP] + 2 oxidized [2Fe-2S]-[ferredoxin] + 2 H2O. Its pathway is lipid metabolism; fatty acid metabolism. Its function is as follows. Converts stearoyl-ACP to oleoyl-ACP by introduction of a cis double bond between carbons 9 and 10 of the acyl chain. This chain is Stearoyl-[acyl-carrier-protein] 9-desaturase, chloroplastic, found in Linum usitatissimum (Flax).